A 675-amino-acid polypeptide reads, in one-letter code: Vitamin K-dependent protein S (675 aa).

The signal sequence occupies residues 1-24; that stretch reads MRVLGGRTGTLLACLALVLPVLEA. Positions 25–41 are excised as a propeptide; sequence NFLSRQHASQVLIRRRR. Residues 42–87 enclose the Gla domain; sequence ANTLLEETKKGNLERECIEELCNKEEAREIFENNPETEYFYPKYLG. 4-carboxyglutamate is present on residues Glu47, Glu48, Glu55, Glu57, Glu60, Glu61, Glu66, Glu67, Glu70, Glu73, and Glu77. A disulfide bond links Cys58 and Cys63. 16 disulfide bridges follow: Cys88-Cys113, Cys121-Cys134, Cys126-Cys143, Cys145-Cys154, Cys161-Cys175, Cys171-Cys184, Cys186-Cys199, Cys205-Cys217, Cys212-Cys226, Cys228-Cys241, Cys247-Cys256, Cys252-Cys265, Cys267-Cys282, Cys288-Cys567, Cys449-Cys475, and Cys638-Cys665. Residues 88–116 form a thrombin-sensitive region; the sequence is CLGSFRAGLFTAARLSTNAYPDLRSCVNA. Residues 117–155 enclose the EGF-like 1 domain; that stretch reads ISDQCNPLPCNEDGFMTCKDGQATFTCICKSGWQGEKCE. Asp136 is modified ((3R)-3-hydroxyaspartate). One can recognise an EGF-like 2; calcium-binding domain in the interval 157–200; the sequence is DINECKDPVNINGGCSQICENTPGSYHCSCKNGFVMLSNKKDCK. At Asn177 the chain carries (3R)-3-hydroxyasparagine. Positions 201–242 constitute an EGF-like 3; calcium-binding domain; it reads DVDECVLKPSICGTAVCKNIPGDFECECAEGYKYNPVSKSCD. Asn219 bears the (3R)-3-hydroxyasparagine mark. One can recognise an EGF-like 4; calcium-binding domain in the interval 243–283; the sequence is DVDECAENLCAQLCVNYPGGYSCYCDGKKGFKLAQDQKSCE. Asn258 is modified ((3R)-3-hydroxyasparagine). 2 Laminin G-like domains span residues 299–475 and 484–665; these read LLYL…NKHC and YYPG…AHSC. Asn499 and Asn509 each carry an N-linked (GlcNAc...) asparagine glycan.

In terms of processing, the iron and 2-oxoglutarate dependent 3-hydroxylation of aspartate and asparagine is (R) stereospecific within EGF domains. Plasma.

Its subcellular location is the secreted. In terms of biological role, anticoagulant plasma protein; it is a cofactor to activated protein C in the degradation of coagulation factors Va and VIIIa. It helps to prevent coagulation and stimulating fibrinolysis. This Bos taurus (Bovine) protein is Vitamin K-dependent protein S (PROS1).